Reading from the N-terminus, the 452-residue chain is Phosphoglucosamine mutase 2 (452 aa).

The active-site Phosphoserine intermediate is the serine 101. The Mg(2+) site is built by serine 101, aspartate 245, aspartate 247, and aspartate 249. Phosphoserine is present on serine 101.

This sequence belongs to the phosphohexose mutase family. Mg(2+) is required as a cofactor. Post-translationally, activated by phosphorylation.

It catalyses the reaction alpha-D-glucosamine 1-phosphate = D-glucosamine 6-phosphate. Catalyzes the conversion of glucosamine-6-phosphate to glucosamine-1-phosphate. The protein is Phosphoglucosamine mutase 2 of Shewanella amazonensis (strain ATCC BAA-1098 / SB2B).